A 322-amino-acid chain; its full sequence is Tetraacyldisaccharide 4'-kinase (322 aa).

Residue 54–61 (SVGGTGKT) participates in ATP binding.

The protein belongs to the LpxK family.

It catalyses the reaction a lipid A disaccharide + ATP = a lipid IVA + ADP + H(+). The protein operates within glycolipid biosynthesis; lipid IV(A) biosynthesis; lipid IV(A) from (3R)-3-hydroxytetradecanoyl-[acyl-carrier-protein] and UDP-N-acetyl-alpha-D-glucosamine: step 6/6. In terms of biological role, transfers the gamma-phosphate of ATP to the 4'-position of a tetraacyldisaccharide 1-phosphate intermediate (termed DS-1-P) to form tetraacyldisaccharide 1,4'-bis-phosphate (lipid IVA). In Francisella tularensis subsp. tularensis (strain FSC 198), this protein is Tetraacyldisaccharide 4'-kinase.